Consider the following 156-residue polypeptide: Lipoprotein signal peptidase (156 aa).

2 helical membrane passes run 52 to 72 (ILEG…IGIV) and 85 to 105 (FATA…DRIF). Active-site residues include D111 and D129. The helical transmembrane segment at 121–141 (NFPIFNVADSALCVGVGILFL) threads the bilayer.

Belongs to the peptidase A8 family.

It localises to the cell membrane. It catalyses the reaction Release of signal peptides from bacterial membrane prolipoproteins. Hydrolyzes -Xaa-Yaa-Zaa-|-(S,diacylglyceryl)Cys-, in which Xaa is hydrophobic (preferably Leu), and Yaa (Ala or Ser) and Zaa (Gly or Ala) have small, neutral side chains.. The protein operates within protein modification; lipoprotein biosynthesis (signal peptide cleavage). Functionally, this protein specifically catalyzes the removal of signal peptides from prolipoproteins. The polypeptide is Lipoprotein signal peptidase (Halalkalibacterium halodurans (strain ATCC BAA-125 / DSM 18197 / FERM 7344 / JCM 9153 / C-125) (Bacillus halodurans)).